The primary structure comprises 523 residues: Monocarboxylate transporter 7 (523 aa).

Topologically, residues 1 to 21 (MTQNKLKLCSKANVYTEVPDG) are cytoplasmic. The chain crosses the membrane as a helical span at residues 22–42 (GWGWAVAVSFFFVEVFTYGII). Topologically, residues 43–62 (KTFGVFFNDLMDSFNESNSR) are extracellular. A helical membrane pass occupies residues 63 to 83 (ISWIISICVFVLTFSAPLATV). At 84 to 91 (LSNRFGHR) the chain is on the cytoplasmic side. A helical membrane pass occupies residues 92-112 (LVVMLGGLLVSTGMVAASFSQ). The Extracellular segment spans residues 113-118 (EVSHMY). A helical transmembrane segment spans residues 119 to 139 (VAIGIISGLGYCFSFLPTVTI). The Cytoplasmic portion of the chain corresponds to 140 to 149 (LSQYFGKRRS). A helical transmembrane segment spans residues 150 to 170 (IVTAVASTGECFAVFAFAPAI). Topologically, residues 171–184 (MALKERIGWRYSLL) are extracellular. The helical transmembrane segment at 185-205 (FVGLLQLNIVIFGALLRPIFI) threads the bilayer. Topologically, residues 206–299 (RGPASPKIVI…KEKSFICYAL (94 aa)) are cytoplasmic. A phosphoserine mark is found at S234, S237, S240, and S247. The helical transmembrane segment at 300-320 (FGLFATLGFFAPSLYIIPLGI) threads the bilayer. The Extracellular segment spans residues 321 to 330 (SLGIDQDRAA). Residues 331 to 351 (FLLSTMAIAEVFGRIGAGFVL) form a helical membrane-spanning segment. Topologically, residues 352 to 358 (NREPIRK) are cytoplasmic. The helical transmembrane segment at 359 to 379 (IYIELICVILLTVSLFAFTFA) threads the bilayer. The Extracellular segment spans residues 380–381 (TE). The chain crosses the membrane as a helical span at residues 382–402 (FWGLMSCSIFFGFMVGTIGGT). Residues 403-423 (HIPLLAEDDVVGIEKMSSAAG) are Cytoplasmic-facing. Residues 424–444 (VYIFIQSIAGLAGPPLAGLLV) traverse the membrane as a helical segment. Residues 445-452 (DQSKIYSR) lie on the Extracellular side of the membrane. Residues 453 to 473 (AFYSCAAGMALAAVCLALVRP) form a helical membrane-spanning segment. Over 474-523 (CKMGLCQHHHSGETKVVSHRGKTLQDIPEDFLEMDLAKNEHRVHVQMEPV) the chain is Cytoplasmic.

It belongs to the major facilitator superfamily. Monocarboxylate porter (TC 2.A.1.13) family. As to quaternary structure, forms functional complexes with BSG/CD147 or EMB/GP70 ancillary proteins.

It is found in the basolateral cell membrane. It carries out the reaction taurine(out) = taurine(in). Monocarboxylate transporter selective for taurine. May associate with BSG/CD147 or EMB/GP70 ancillary proteins to mediate facilitative efflux or influx of taurine across the plasma membrane. The transport is pH- and sodium-independent. Rather low-affinity, is likely effective for taurine transport in tissues where taurine is present at high concentrations. The chain is Monocarboxylate transporter 7 from Homo sapiens (Human).